Reading from the N-terminus, the 248-residue chain is 14-3-3 protein zeta (248 aa).

Belongs to the 14-3-3 family. As to quaternary structure, homodimer.

The protein localises to the cytoplasm. Functionally, adapter protein implicated in the regulation of a large spectrum of both general and specialized signaling pathways. Binds to a large number of partners, usually by recognition of a phosphoserine or phosphothreonine motif. Binding generally results in the modulation of the activity of the binding partner. The sequence is that of 14-3-3 protein zeta (14-3-3zeta) from Aedes aegypti (Yellowfever mosquito).